We begin with the raw amino-acid sequence, 341 residues long: Biotin synthase (341 aa).

In terms of domain architecture, Radical SAM core spans 56 to 285 (ADIQRAALLS…KARVRLSAGR (230 aa)). 3 residues coordinate [4Fe-4S] cluster: C71, C75, and C78. [2Fe-2S] cluster-binding residues include C116, C148, C208, and R280.

It belongs to the radical SAM superfamily. Biotin synthase family. As to quaternary structure, homodimer. It depends on [4Fe-4S] cluster as a cofactor. [2Fe-2S] cluster serves as cofactor.

It catalyses the reaction (4R,5S)-dethiobiotin + (sulfur carrier)-SH + 2 reduced [2Fe-2S]-[ferredoxin] + 2 S-adenosyl-L-methionine = (sulfur carrier)-H + biotin + 2 5'-deoxyadenosine + 2 L-methionine + 2 oxidized [2Fe-2S]-[ferredoxin]. It functions in the pathway cofactor biosynthesis; biotin biosynthesis; biotin from 7,8-diaminononanoate: step 2/2. In terms of biological role, catalyzes the conversion of dethiobiotin (DTB) to biotin by the insertion of a sulfur atom into dethiobiotin via a radical-based mechanism. The sequence is that of Biotin synthase from Methylorubrum populi (strain ATCC BAA-705 / NCIMB 13946 / BJ001) (Methylobacterium populi).